Consider the following 246-residue polypeptide: Triosephosphate isomerase (246 aa).

9–11 (NWK) is a substrate binding site. H99 acts as the Electrophile in catalysis. The active-site Proton acceptor is the E168. Substrate is bound by residues G174, S207, and 228–229 (GG).

The protein belongs to the triosephosphate isomerase family. Homodimer.

The protein resides in the cytoplasm. The enzyme catalyses D-glyceraldehyde 3-phosphate = dihydroxyacetone phosphate. The protein operates within carbohydrate biosynthesis; gluconeogenesis. It functions in the pathway carbohydrate degradation; glycolysis; D-glyceraldehyde 3-phosphate from glycerone phosphate: step 1/1. Involved in the gluconeogenesis. Catalyzes stereospecifically the conversion of dihydroxyacetone phosphate (DHAP) to D-glyceraldehyde-3-phosphate (G3P). This Prochlorococcus marinus (strain NATL1A) protein is Triosephosphate isomerase.